The sequence spans 527 residues: Flavonoid 3',5'-hydroxylase CYP75B138 (527 aa).

Residues 6-26 traverse the membrane as a helical segment; it reads LDIILFISAIVFLSIYYYNLF. Heme is bound at residue Cys459.

This sequence belongs to the cytochrome P450 family. Heme serves as cofactor. As to expression, expressed in young cromes.

Its subcellular location is the membrane. It catalyses the reaction a 3',5'-unsubstituted flavanone + 2 reduced [NADPH--hemoprotein reductase] + 2 O2 = a 3',5'-dihydroxyflavanone + 2 oxidized [NADPH--hemoprotein reductase] + 2 H2O + 2 H(+). The catalysed reaction is (2S)-naringenin + 2 reduced [NADPH--hemoprotein reductase] + 2 O2 = (2S)-dihydrotricetin + 2 oxidized [NADPH--hemoprotein reductase] + 2 H2O + 2 H(+). The enzyme catalyses (2R,3R)-dihydrokaempferol + 2 reduced [NADPH--hemoprotein reductase] + 2 O2 = (2R,3R)-dihydromyricetin + 2 oxidized [NADPH--hemoprotein reductase] + 2 H2O + 2 H(+). It carries out the reaction kaempferol + 2 reduced [NADPH--hemoprotein reductase] + 2 O2 = myricetin + 2 oxidized [NADPH--hemoprotein reductase] + 2 H2O + 2 H(+). The protein operates within flavonoid metabolism. In terms of biological role, flavonoid 3',5'-hydroxylase that catalyzes the 3'- and 5'-hydroxylation of flavanones, dihydroflavonols and flavonols. Converts narigenin to dihydrotricetin, dihydrokaempferol to dihydromyricetin and kaempferol to myricetin. This is Flavonoid 3',5'-hydroxylase CYP75B138 from Crocosmia x crocosmiiflora (Montbretia).